Reading from the N-terminus, the 188-residue chain is Protein GrpE (188 aa).

Belongs to the GrpE family. As to quaternary structure, homodimer.

It localises to the cytoplasm. Its function is as follows. Participates actively in the response to hyperosmotic and heat shock by preventing the aggregation of stress-denatured proteins, in association with DnaK and GrpE. It is the nucleotide exchange factor for DnaK and may function as a thermosensor. Unfolded proteins bind initially to DnaJ; upon interaction with the DnaJ-bound protein, DnaK hydrolyzes its bound ATP, resulting in the formation of a stable complex. GrpE releases ADP from DnaK; ATP binding to DnaK triggers the release of the substrate protein, thus completing the reaction cycle. Several rounds of ATP-dependent interactions between DnaJ, DnaK and GrpE are required for fully efficient folding. The sequence is that of Protein GrpE from Chromobacterium violaceum (strain ATCC 12472 / DSM 30191 / JCM 1249 / CCUG 213 / NBRC 12614 / NCIMB 9131 / NCTC 9757 / MK).